The chain runs to 100 residues: Urease subunit gamma (100 aa).

The protein belongs to the urease gamma subunit family. In terms of assembly, heterotrimer of UreA (gamma), UreB (beta) and UreC (alpha) subunits. Three heterotrimers associate to form the active enzyme.

It localises to the cytoplasm. The enzyme catalyses urea + 2 H2O + H(+) = hydrogencarbonate + 2 NH4(+). It participates in nitrogen metabolism; urea degradation; CO(2) and NH(3) from urea (urease route): step 1/1. The sequence is that of Urease subunit gamma from Burkholderia thailandensis (strain ATCC 700388 / DSM 13276 / CCUG 48851 / CIP 106301 / E264).